The chain runs to 409 residues: MNKPENFEEAIEIKRDPEDFSVEEIADIEPDPNGKYTIIKARVRDWDTNRIAAEIARRLHMSRKRVTFAGTKDKRAVKLQYFCINSADVDVASLSGIKDFEVIESFKSSHYLTLGDLIANHFKIRFYGIDPEMFRERYVHIISKGGFPNFFGDQRFGSRRRNTHEIGKLIIKGEYEEAVKKYIYDEKYDKESYRKHFIDTLDYKTALERFPHSLSFERSLIGYYARNGTFKGAFDSLPKNLTIMFVHAYQSYLFNRILDERLKIYGLNAVLPGDIAFPVDAYFNPDKSKPIEVNSYNREKISKLVSSDKIRISLPIFGYKTWIDNSDFGDVEYGILKEEGISQDDFKNKDFAYLSSSGDRRIISAKPINFSLENNVVEFTLGKGIYATVFLSSIGRLKENVYSDSEAEL.

Asp73 acts as the Nucleophile in catalysis. Positions 146-365 (GFPNFFGDQR…SSGDRRIISA (220 aa)) constitute a TRUD domain.

The protein belongs to the pseudouridine synthase TruD family.

The catalysed reaction is uridine(13) in tRNA = pseudouridine(13) in tRNA. Functionally, could be responsible for synthesis of pseudouridine from uracil-13 in transfer RNAs. The polypeptide is Probable tRNA pseudouridine synthase D (Thermoplasma volcanium (strain ATCC 51530 / DSM 4299 / JCM 9571 / NBRC 15438 / GSS1)).